A 301-amino-acid chain; its full sequence is Ribosomal protein L11 methyltransferase (301 aa).

S-adenosyl-L-methionine-binding residues include Thr147, Gly168, Asp190, and Asn237.

This sequence belongs to the methyltransferase superfamily. PrmA family.

Its subcellular location is the cytoplasm. It catalyses the reaction L-lysyl-[protein] + 3 S-adenosyl-L-methionine = N(6),N(6),N(6)-trimethyl-L-lysyl-[protein] + 3 S-adenosyl-L-homocysteine + 3 H(+). Functionally, methylates ribosomal protein L11. The chain is Ribosomal protein L11 methyltransferase from Synechococcus sp. (strain RCC307).